We begin with the raw amino-acid sequence, 316 residues long: Small neutral protease regulatory protein (316 aa).

The HTH lysR-type domain maps to 1–56; it reads MRHLRALCAIADTGSVRRAARELGVSQPALTTQLRRIEQSLGAELFHRGRDGCRPT. The segment at residues 16 to 35 is a DNA-binding region (H-T-H motif); that stretch reads VRRAARELGVSQPALTTQLR.

It belongs to the LysR transcriptional regulatory family.

Transcriptional trans-activator of the gene (mprA) for the small neutral protease. The polypeptide is Small neutral protease regulatory protein (mprR) (Streptomyces coelicolor).